Here is a 481-residue protein sequence, read N- to C-terminus: Leukocyte immunoglobulin-like receptor subfamily A member 6 (481 aa).

The signal sequence occupies residues 1–23 (MTPALTALLCLGLSLGPRTRVQA). Topologically, residues 24 to 447 (GPFPKPTLWA…SHAKDYTVEN (424 aa)) are extracellular. Cys49 and Cys98 are oxidised to a cystine. The segment covering 59–70 (QLDKEGSPEPLD) has biased composition (basic and acidic residues). A disordered region spans residues 59 to 78 (QLDKEGSPEPLDRNNPLEPK). A glycan (N-linked (GlcNAc...) asparagine) is linked at Asn139. Disulfide bonds link Cys144–Cys196 and Cys245–Cys296. Ig-like C2-type domains follow at residues 225–314 (PSLL…DPLN) and 323–408 (DTVS…HLLS). N-linked (GlcNAc...) asparagine glycans are attached at residues Asn301 and Asn340. A disulfide bridge connects residues Cys345 and Cys396. The segment at 419–439 (SGHSGGSSLPPTGPPSTPASH) is disordered. The helical transmembrane segment at 448-468 (LIRMGMAGLVLVFLGILLFEA) threads the bilayer. Topologically, residues 469–481 (QHSQRNPQDAAGR) are cytoplasmic.

It is found in the membrane. Its function is as follows. May act as receptor for class I MHC antigens. The chain is Leukocyte immunoglobulin-like receptor subfamily A member 6 (LILRA6) from Homo sapiens (Human).